A 588-amino-acid chain; its full sequence is MAEMGSKGVTAGKIASNVQKKLTRAQEKVLQKLGKADETKDEQFEQCVQNFNKQLTEGTRLQKDLRTYLASVKAMHEASKKLSECLQEVYEPEWPGRDEANKIAENNDLLWMDYHQKLVDQALLTMDTYLGQFPDIKSRIAKRGRKLVDYDSARHHYESLQTAKKKDEAKIAKPVSLLEKAAPQWCQGKLQAHLVAQTNLLRNQAEEELIKAQKVFEEMNVDLQEELPSLWNSRVGFYVNTFQSIAGLEENFHKEMSKLNQNLNDVLVSLEKQHGSNTFTVKAQPSDSAPEKGNKSPSPPPDGSPAATPEIRVNHEPEPASGASPGATIPKSPSQLRKGPPVPPPPKHTPSKEMKQEQILSLFDDAFVPEISVTTPSQFEAPGPFSEQASLLDLDFEPLPPVASPVKAPTPSGQSIPWDLWEPTESQAGVLPSGEPSSAEGSFAVAWPSQTAEPGPAQPAEASEVVGGTQEPGETAASEATSSSLPAVVVETFSATVNGAVEGSTTTGRLDLPPGFMFKVQAQHDYTATDTDELQLKAGDVVLVIPFQNPEEQDEGWLMGVKESDWNQHKELEKCRGVFPENFTERVQ.

Position 2 is an N-acetylalanine (alanine 2). The tract at residues 2–122 is interaction with BIN2; the sequence is AEMGSKGVTA…DYHQKLVDQA (121 aa). Coiled-coil stretches lie at residues 15–42 and 193–274; these read ASNVQKKLTRAQEKVLQKLGKADETKDE and HLVA…EKQH. A BAR domain is found at 29 to 276; that stretch reads VLQKLGKADE…LVSLEKQHGS (248 aa). The interval 279–355 is disordered; sequence FTVKAQPSDS…PKHTPSKEMK (77 aa). Phosphoserine occurs at positions 296, 298, and 304. Residue threonine 308 is modified to Phosphothreonine. 2 positions are modified to phosphoserine: serine 324 and serine 332. The segment at 379-422 is clathrin-binding; it reads FEAPGPFSEQASLLDLDFEPLPPVASPVKAPTPSGQSIPWDLWE. A disordered region spans residues 448–483; it reads PSQTAEPGPAQPAEASEVVGGTQEPGETAASEATSS. The span at 474 to 483 shows a compositional bias: low complexity; the sequence is ETAASEATSS. One can recognise an SH3 domain in the interval 515–588; sequence GFMFKVQAQH…FPENFTERVQ (74 aa).

Heterodimer with AMPH. Binds SH3GLB1. Interacts (via SH3 domain) with DNM1. Interacts with SYNJ1. Interacts (via SH3 domain) with DNM2. Interacts with CLTC. Interacts with AP2A2. Interacts with AP2B1. Interacts with MYC (via N-terminal transactivation domain); the interaction requires the integrity of the conserved MYC box regions 1 and 2. Interacts with BIN2. Interacts with SNX4. Interacts (via BAR domain) with BACE1. Binds (via BAR domain) F-actin. Post-translationally, phosphorylated by protein kinase C. Highly expressed in the brain and muscle. Isoform AMPH2-1 is expressed only in the brain where it is concentrated in axon initial segments and nodes of Ranvier. Isoform AMPH2-2 is widely expressed.

The protein resides in the nucleus. The protein localises to the cytoplasm. Its subcellular location is the endosome. It localises to the cell membrane. It is found in the sarcolemma. The protein resides in the T-tubule. Is a key player in the control of plasma membrane curvature, and membrane shaping and remodeling. Required in muscle cells for the formation of T-tubules, tubular invaginations of the plasma membrane that function in depolarization-contraction coupling. Required in muscle cells for the formation of T-tubules, tubular invaginations of the plasma membrane that function in depolarization-contraction coupling. Is a negative regulator of endocytosis. Is also involved in the regulation of intracellular vesicles sorting, modulation of BACE1 trafficking and the control of amyloid-beta production. In neuronal circuits, endocytosis regulation may influence the internalization of PHF-tau aggregates. May be involved in the regulation of MYC activity and the control cell proliferation. The sequence is that of Myc box-dependent-interacting protein 1 (Bin1) from Rattus norvegicus (Rat).